The chain runs to 160 residues: Cytochrome b6-f complex subunit 4 (160 aa).

3 helical membrane-spanning segments follow: residues 36–56, 95–115, and 131–151; these read LLYVFPVVIMGTIGLVVGLAV, LLGIACQAAIPLGLMLIPFIE, and TFFMIGTLVTLWLGAGAIFPI.

This sequence belongs to the cytochrome b family. PetD subfamily. In terms of assembly, the 4 large subunits of the cytochrome b6-f complex are cytochrome b6, subunit IV (17 kDa polypeptide, PetD), cytochrome f and the Rieske protein, while the 4 small subunits are PetG, PetL, PetM and PetN. The complex functions as a dimer.

The protein localises to the cellular thylakoid membrane. Component of the cytochrome b6-f complex, which mediates electron transfer between photosystem II (PSII) and photosystem I (PSI), cyclic electron flow around PSI, and state transitions. The chain is Cytochrome b6-f complex subunit 4 from Gloeothece citriformis (strain PCC 7424) (Cyanothece sp. (strain PCC 7424)).